A 639-amino-acid polypeptide reads, in one-letter code: MLSARAAATAAAAAASPLWKRGEGGSSGSGSGCTSCREVRRRAAAVRVRAAAPRRVEAVAMESAAETEKKEEVAAAGGGVEDMATEEVPVTPWAFSVASGYTLLRDPHHNKGLAFSEKERDAHYLRGLLPPAVVSQDLQVKKIMHNLRQYSVPLQRYMAMMDLQERNERLFYKLLIDNVEELLPVVYTPTVGEACQKYGSIFRQPQGLYVSLKDKGKVLDVLRNWPERNIQVIVVTDGERILGLGDLGCQGMGIPVGKLSLYTALGGVRPSACLPITIDVGTNNEQLLNDEFYIGLRQRRATGKEYHELMEEFMSAVKQIYGEKVLIQFEDFANHNAFDLLAKYSKSHLVFNDDIQGTASVVLAGLLSSLKVVGGTLAEHTYLFLGAGEAGTGIAELIALEISKQTKAPIEECRKKVWLLDSKGLIVNSRKESLQAFKKPWAHEHEPVTTLLDAVQSIKPTVLIGTSGVGKTFTKEVIEAMASFNERPVIFSLSNPTSHSECTAEEAYNWSQGRAVFASGSPFDPVEYNGKIHVPGQSNNAYIFPGFGLGVVISGAVRVHEDMLLAASETLADQATQENFEKGSIFPPFTNIRKISARIAASVAAKAYELGLATRLPQPRDLEKYAESCMYTPVYRSYR.

The N-terminal 49 residues, 1–49, are a transit peptide targeting the chloroplast; that stretch reads MLSARAAATAAAAAASPLWKRGEGGSSGSGSGCTSCREVRRRAAAVRVR. Positions 15–34 are disordered; it reads ASPLWKRGEGGSSGSGSGCT. Catalysis depends on tyrosine 187, which acts as the Proton donor. Position 240 (arginine 240) interacts with NAD(+). The Proton acceptor role is filled by lysine 258. Glutamate 330, aspartate 331, and aspartate 354 together coordinate a divalent metal cation. Aspartate 354 contributes to the NAD(+) binding site. Residue 383–399 coordinates NADP(+); sequence LFLGAGEAGTGIAELIA. Asparagine 495 is a binding site for NAD(+).

It belongs to the malic enzymes family. As to quaternary structure, homotetramer. Requires Mg(2+) as cofactor. Mn(2+) serves as cofactor.

The protein localises to the plastid. It localises to the chloroplast. It catalyses the reaction (S)-malate + NADP(+) = pyruvate + CO2 + NADPH. It carries out the reaction oxaloacetate + H(+) = pyruvate + CO2. Its pathway is photosynthesis; C4 acid pathway. The chloroplastic ME isoform decarboxylates malate shuttled from neighboring mesophyll cells. The CO(2) released is then refixed by ribulose-bisphosphate carboxylase. This pathway eliminates the photorespiratory loss of CO(2) that occurs in most plants. In Oryza sativa subsp. japonica (Rice), this protein is NADP-dependent malic enzyme, chloroplastic (ME6).